A 399-amino-acid polypeptide reads, in one-letter code: Succinate--CoA ligase [ADP-forming] subunit beta (399 aa).

Positions 9–254 constitute an ATP-grasp domain; sequence KAVLQPFGVS…ETEEDAKEIE (246 aa). ATP contacts are provided by residues lysine 46, 53–55, glutamate 109, serine 112, and glutamate 117; that span reads GRG. The Mg(2+) site is built by asparagine 209 and aspartate 223. Substrate is bound by residues asparagine 274 and 331–333; that span reads GIM.

Belongs to the succinate/malate CoA ligase beta subunit family. In terms of assembly, heterotetramer of two alpha and two beta subunits. Mg(2+) serves as cofactor.

The enzyme catalyses succinate + ATP + CoA = succinyl-CoA + ADP + phosphate. It catalyses the reaction GTP + succinate + CoA = succinyl-CoA + GDP + phosphate. The protein operates within carbohydrate metabolism; tricarboxylic acid cycle; succinate from succinyl-CoA (ligase route): step 1/1. Its function is as follows. Succinyl-CoA synthetase functions in the citric acid cycle (TCA), coupling the hydrolysis of succinyl-CoA to the synthesis of either ATP or GTP and thus represents the only step of substrate-level phosphorylation in the TCA. The beta subunit provides nucleotide specificity of the enzyme and binds the substrate succinate, while the binding sites for coenzyme A and phosphate are found in the alpha subunit. This chain is Succinate--CoA ligase [ADP-forming] subunit beta, found in Rhodopseudomonas palustris (strain BisB18).